We begin with the raw amino-acid sequence, 413 residues long: 1-acylglycerol-3-phosphate O-acyltransferase Pnpla3 (413 aa).

Residues 1-42 (MYDPERRWSLSFAGCGFLGFYHVGATLCLSERAPHLLRDART) lie on the Cytoplasmic side of the membrane. The region spanning 10 to 179 (LSFAGCGFLG…SDNVPVLDAK (170 aa)) is the PNPLA domain. A GXGXXG motif is present at residues 14–19 (GCGFLG). Residues 43 to 63 (FFGCSAGALHAVTFVCSLPLG) traverse the membrane as a helical; Signal-anchor for type II membrane protein segment. The GXSXG signature appears at 45-49 (GCSAG). S47 functions as the Nucleophile in the catalytic mechanism. Residues 64-413 (RIMEILMDLV…HKPQGNSAGL (350 aa)) lie on the Lumenal side of the membrane. The active-site Proton acceptor is the D166. The short motif at 166 to 168 (DGG) is the DGA/G element. Residues N206 and N209 are each glycosylated (N-linked (GlcNAc...) asparagine). The segment at 389-413 (KDDHRMLKHGHHPSPHKPQGNSAGL) is disordered. Residues 394–403 (MLKHGHHPSP) show a composition bias toward basic residues.

Restricted to adipose tissue. Expressed in inguinal and epididymal white adipose tissues and in interscapular brown adipose tissue. Also expressed in liver in response to high-sucrose diet.

The protein localises to the membrane. It localises to the lipid droplet. It carries out the reaction a 1-acyl-sn-glycero-3-phosphate + an acyl-CoA = a 1,2-diacyl-sn-glycero-3-phosphate + CoA. The enzyme catalyses a triacylglycerol + H2O = a diacylglycerol + a fatty acid + H(+). It catalyses the reaction a 1-acylglycerol + a 1,3-diacylglycerol = a triacylglycerol + glycerol. The catalysed reaction is a 1-acylglycerol + a 1,2-diacylglycerol = a triacylglycerol + glycerol. It carries out the reaction 2 a 1-acylglycerol = a 1,2-diacylglycerol + glycerol. The enzyme catalyses 1-(9Z-octadecenoyl)-sn-glycero-3-phosphate + (9Z)-octadecenoyl-CoA = 1,2-di-(9Z-octadecenoyl)-sn-glycero-3-phosphate + CoA. It catalyses the reaction 1-(9Z-octadecenoyl)-sn-glycero-3-phosphate + hexadecanoyl-CoA = 1-(9Z)-octadecenoyl-2-hexadecanoyl-sn-glycero-3-phosphate + CoA. The catalysed reaction is 1-(9Z-octadecenoyl)-sn-glycero-3-phosphate + (9Z,12Z)-octadecadienoyl-CoA = 1-(9Z)-octadecenoyl-2-(9Z,12Z)-octadecadienoyl-sn-glycero-3-phosphate + CoA. It carries out the reaction 1-(9Z-octadecenoyl)-sn-glycero-3-phosphate + (5Z,8Z,11Z,14Z)-eicosatetraenoyl-CoA = 1-(9Z)-octadecenoyl-2-(5Z,8Z,11Z,14Z)-eicosatetraenoyl-sn-glycero-3-phosphate + CoA. The enzyme catalyses 2 1-(9Z-octadecenoyl)-glycerol = 1,2-di-(9Z-octadecenoyl)-glycerol + glycerol. It catalyses the reaction 1-(9Z-octadecenoyl)-glycerol + 1,2-di-(9Z-octadecenoyl)-glycerol = 1,2,3-tri-(9Z-octadecenoyl)-glycerol + glycerol. The catalysed reaction is 1-(9Z-octadecenoyl)-glycerol + 1,3-di-(9Z-octadecenoyl)-glycerol = 1,2,3-tri-(9Z-octadecenoyl)-glycerol + glycerol. It carries out the reaction 1,2,3-tri-(9Z-octadecenoyl)-glycerol + H2O = 1,3-di-(9Z-octadecenoyl)-glycerol + (9Z)-octadecenoate + H(+). The enzyme catalyses a 1,2-diacyl-sn-glycero-3-phosphocholine + H2O = a 1-acyl-sn-glycero-3-phosphocholine + a fatty acid + H(+). It participates in phospholipid metabolism. It functions in the pathway glycerolipid metabolism. Functionally, specifically catalyzes coenzyme A (CoA)-dependent acylation of 1-acyl-sn-glycerol 3-phosphate (2-lysophosphatidic acid/LPA) to generate phosphatidic acid (PA), an important metabolic intermediate and precursor for both triglycerides and glycerophospholipids. Does not esterify other lysophospholipids. Acyl donors are long chain (at least C16) fatty acyl-CoAs: arachidonoyl-CoA, linoleoyl-CoA, oleoyl-CoA and at a lesser extent palmitoyl-CoA. Additionally possesses low triacylglycerol lipase and CoA-independent acylglycerol transacylase activities and thus may play a role in acyl-chain remodeling of triglycerides. In vitro may express hydrolytic activity against glycerolipids triacylglycerol, diacylglycerol and monoacylglycerol, with a strong preference for oleic acid as the acyl moiety. However, the triacylglycerol hydrolase activity is controversial and may be very low. Possesses phospholipase A2 activity. The sequence is that of 1-acylglycerol-3-phosphate O-acyltransferase Pnpla3 from Mus musculus (Mouse).